Reading from the N-terminus, the 163-residue chain is Transcription elongation factor GreB (163 aa).

Positions 54-76 form a coiled coil; it reads GKRRMREIDRRIRFLTKRLEAAV.

It belongs to the GreA/GreB family. GreB subfamily.

Functionally, necessary for efficient RNA polymerase transcription elongation past template-encoded arresting sites. The arresting sites in DNA have the property of trapping a certain fraction of elongating RNA polymerases that pass through, resulting in locked ternary complexes. Cleavage of the nascent transcript by cleavage factors such as GreA or GreB allows the resumption of elongation from the new 3'terminus. GreB releases sequences of up to 9 nucleotides in length. The polypeptide is Transcription elongation factor GreB (Neisseria meningitidis serogroup B (strain ATCC BAA-335 / MC58)).